A 974-amino-acid polypeptide reads, in one-letter code: Glycine dehydrogenase (decarboxylating) (974 aa).

Lys720 carries the post-translational modification N6-(pyridoxal phosphate)lysine.

It belongs to the GcvP family. As to quaternary structure, the glycine cleavage system is composed of four proteins: P, T, L and H. Pyridoxal 5'-phosphate serves as cofactor.

It carries out the reaction N(6)-[(R)-lipoyl]-L-lysyl-[glycine-cleavage complex H protein] + glycine + H(+) = N(6)-[(R)-S(8)-aminomethyldihydrolipoyl]-L-lysyl-[glycine-cleavage complex H protein] + CO2. Its function is as follows. The glycine cleavage system catalyzes the degradation of glycine. The P protein binds the alpha-amino group of glycine through its pyridoxal phosphate cofactor; CO(2) is released and the remaining methylamine moiety is then transferred to the lipoamide cofactor of the H protein. The chain is Glycine dehydrogenase (decarboxylating) from Cupriavidus metallidurans (strain ATCC 43123 / DSM 2839 / NBRC 102507 / CH34) (Ralstonia metallidurans).